A 548-amino-acid polypeptide reads, in one-letter code: Membrane protein insertase YidC (548 aa).

A helical membrane pass occupies residues 6–26 (NLLVIALLFVSFMIWQAWEQD). The disordered stretch occupies residues 28 to 56 (NPQPQTQQTTQTTTTAAGSAADQGVPASG). Over residues 29–42 (PQPQTQQTTQTTTT) the composition is skewed to low complexity. 4 consecutive transmembrane segments (helical) span residues 350 to 370 (FVGNWGFSIIIITFIVRGIMY), 424 to 444 (FPLIIQMPIFLALYYMLMGSI), 458 to 478 (LSAQDPYYILPILMGVTMFFI), and 499 to 519 (PVIFTVFFLWFPSGLVLYYIV).

It belongs to the OXA1/ALB3/YidC family. Type 1 subfamily. Interacts with the Sec translocase complex via SecD. Specifically interacts with transmembrane segments of nascent integral membrane proteins during membrane integration.

Its subcellular location is the cell inner membrane. In terms of biological role, required for the insertion and/or proper folding and/or complex formation of integral membrane proteins into the membrane. Involved in integration of membrane proteins that insert both dependently and independently of the Sec translocase complex, as well as at least some lipoproteins. Aids folding of multispanning membrane proteins. This is Membrane protein insertase YidC from Salmonella typhimurium (strain LT2 / SGSC1412 / ATCC 700720).